The sequence spans 34 residues: Hemopexin (34 aa).

Residues 1–25 (RPLTQHKPHTPGDEHPHGAEPPGXD) form a disordered region.

This sequence belongs to the hemopexin family. As to expression, expressed by the liver and secreted in plasma.

It localises to the secreted. Binds heme and transports it to the liver for breakdown and iron recovery, after which the free hemopexin returns to the circulation. The polypeptide is Hemopexin (HPX) (Gallus gallus (Chicken)).